Here is a 236-residue protein sequence, read N- to C-terminus: Phosphoribosylaminoimidazole-succinocarboxamide synthase (236 aa).

The protein belongs to the SAICAR synthetase family.

The catalysed reaction is 5-amino-1-(5-phospho-D-ribosyl)imidazole-4-carboxylate + L-aspartate + ATP = (2S)-2-[5-amino-1-(5-phospho-beta-D-ribosyl)imidazole-4-carboxamido]succinate + ADP + phosphate + 2 H(+). The protein operates within purine metabolism; IMP biosynthesis via de novo pathway; 5-amino-1-(5-phospho-D-ribosyl)imidazole-4-carboxamide from 5-amino-1-(5-phospho-D-ribosyl)imidazole-4-carboxylate: step 1/2. This is Phosphoribosylaminoimidazole-succinocarboxamide synthase from Pseudomonas savastanoi pv. phaseolicola (strain 1448A / Race 6) (Pseudomonas syringae pv. phaseolicola (strain 1448A / Race 6)).